A 503-amino-acid polypeptide reads, in one-letter code: UDP-N-acetylmuramoylalanine--D-glutamate ligase (503 aa).

129–135 (GTNGKTT) provides a ligand contact to ATP.

This sequence belongs to the MurCDEF family.

It localises to the cytoplasm. The enzyme catalyses UDP-N-acetyl-alpha-D-muramoyl-L-alanine + D-glutamate + ATP = UDP-N-acetyl-alpha-D-muramoyl-L-alanyl-D-glutamate + ADP + phosphate + H(+). The protein operates within cell wall biogenesis; peptidoglycan biosynthesis. In terms of biological role, cell wall formation. Catalyzes the addition of glutamate to the nucleotide precursor UDP-N-acetylmuramoyl-L-alanine (UMA). In Burkholderia multivorans (strain ATCC 17616 / 249), this protein is UDP-N-acetylmuramoylalanine--D-glutamate ligase.